We begin with the raw amino-acid sequence, 417 residues long: Serine hydroxymethyltransferase 1 (417 aa).

(6S)-5,6,7,8-tetrahydrofolate contacts are provided by residues leucine 121 and 125–127 (GHL). Lysine 229 is modified (N6-(pyridoxal phosphate)lysine). 355–357 (SPF) contributes to the (6S)-5,6,7,8-tetrahydrofolate binding site.

Belongs to the SHMT family. As to quaternary structure, homodimer. Pyridoxal 5'-phosphate serves as cofactor.

The protein localises to the cytoplasm. The catalysed reaction is (6R)-5,10-methylene-5,6,7,8-tetrahydrofolate + glycine + H2O = (6S)-5,6,7,8-tetrahydrofolate + L-serine. Its pathway is one-carbon metabolism; tetrahydrofolate interconversion. It participates in amino-acid biosynthesis; glycine biosynthesis; glycine from L-serine: step 1/1. Functionally, catalyzes the reversible interconversion of serine and glycine with tetrahydrofolate (THF) serving as the one-carbon carrier. This reaction serves as the major source of one-carbon groups required for the biosynthesis of purines, thymidylate, methionine, and other important biomolecules. Also exhibits THF-independent aldolase activity toward beta-hydroxyamino acids, producing glycine and aldehydes, via a retro-aldol mechanism. The sequence is that of Serine hydroxymethyltransferase 1 from Pectobacterium atrosepticum (strain SCRI 1043 / ATCC BAA-672) (Erwinia carotovora subsp. atroseptica).